The chain runs to 86 residues: Beta-mammal/insect toxin To1 (86 aa).

Positions 1–20 (MTRFVLFISCFFLIDMIVEC) are cleaved as a signal peptide. The region spanning 22–84 (KEGYLVGNDG…TWSSATNKCK (63 aa)) is the LCN-type CS-alpha/beta domain. 4 disulfides stabilise this stretch: Cys32–Cys83, Cys36–Cys58, Cys44–Cys64, and Cys48–Cys66. Lysine amide is present on Lys84.

It belongs to the long (4 C-C) scorpion toxin superfamily. Sodium channel inhibitor family. Beta subfamily. Expressed by the venom gland.

The protein resides in the secreted. Its function is as follows. Beta toxin that show multiple effects. It enhances the open probability at more negative potentials of human Nav1.3/SCN3A and Nav1.6/SCN8A, of the insect channel BgNaV1 and of arachnid VdNaV1 channel. It promotes an important shift in slow inactivation processes as a function of the prepulse voltage in human Nav1.3/SCN3A and Nav1.6/SCN8A and a small shift in Nav1.1/SCN1A, Nav1.2/SCN2A and Nav1.4/SCN4A. Finally, it reduces the peak of sodium currents in Nav1.3/SCN3A (80% inhibition at 70 nM of toxin), Nav1.6/SCN8A (55.3%), Nav1.1/SCN1A (53.3%), Nav1.5/SCN5A (46.7%), Nav1.2/SCN2A (42.7%) and Nav1.4/SCN4A (20%) voltage-gated sodium channels. It has also been shown to affect the sodium current permeability of rat cerebellum granular cells in a partially reversible manner. In vivo, an intraperitoneal injection (20 ug) into mice produces excitability, respiratory problems, convulsions and death, within the first 30 minutes after injection. The chain is Beta-mammal/insect toxin To1 from Tityus obscurus (Amazonian scorpion).